A 192-amino-acid polypeptide reads, in one-letter code: dCTP deaminase, dUMP-forming (192 aa).

DCTP is bound by residues 101 to 106, D119, 127 to 129, Q148, Y162, and Q174; these read KSSLGR and TLE. The Proton donor/acceptor role is filled by E129. The tract at residues 162–192 is disordered; the sequence is YGSGADGSRYQGQRGPTASRSHVKFHRTHVE. Positions 171-181 are enriched in polar residues; it reads YQGQRGPTASR. Basic residues predominate over residues 182-192; that stretch reads SHVKFHRTHVE.

It belongs to the dCTP deaminase family. As to quaternary structure, homotrimer.

The catalysed reaction is dCTP + 2 H2O = dUMP + NH4(+) + diphosphate. It participates in pyrimidine metabolism; dUMP biosynthesis; dUMP from dCTP: step 1/1. Bifunctional enzyme that catalyzes both the deamination of dCTP to dUTP and the hydrolysis of dUTP to dUMP without releasing the toxic dUTP intermediate. This chain is dCTP deaminase, dUMP-forming, found in Beutenbergia cavernae (strain ATCC BAA-8 / DSM 12333 / CCUG 43141 / JCM 11478 / NBRC 16432 / NCIMB 13614 / HKI 0122).